A 225-amino-acid chain; its full sequence is Ribonuclease T (225 aa).

A disordered region spans residues 1–21 (MSEDHFDEEHEGHGGGGGSRH). The 175-residue stretch at 33–207 (VVVDVETGGF…YDTEKTAELF (175 aa)) folds into the Exonuclease domain. Mg(2+) contacts are provided by D36, E38, H194, and D199. H194 functions as the Proton donor/acceptor in the catalytic mechanism.

The protein belongs to the RNase T family. As to quaternary structure, homodimer. Requires Mg(2+) as cofactor.

In terms of biological role, trims short 3' overhangs of a variety of RNA species, leaving a one or two nucleotide 3' overhang. Responsible for the end-turnover of tRNA: specifically removes the terminal AMP residue from uncharged tRNA (tRNA-C-C-A). Also appears to be involved in tRNA biosynthesis. The polypeptide is Ribonuclease T (Pseudomonas syringae pv. tomato (strain ATCC BAA-871 / DC3000)).